The following is a 152-amino-acid chain: Glutamyl-tRNA(Gln) amidotransferase subunit F, mitochondrial (152 aa).

It belongs to the GatF family. Subunit of the heterotrimeric GatFAB amidotransferase (AdT) complex, composed of A, B and F subunits.

It localises to the mitochondrion inner membrane. The enzyme catalyses L-glutamyl-tRNA(Gln) + L-glutamine + ATP + H2O = L-glutaminyl-tRNA(Gln) + L-glutamate + ADP + phosphate + H(+). Allows the formation of correctly charged Gln-tRNA(Gln) through the transamidation of misacylated Glu-tRNA(Gln) in the mitochondria. The reaction takes place in the presence of glutamine and ATP through an activated gamma-phospho-Glu-tRNA(Gln). Required for proper protein synthesis within the mitochondrion. The protein is Glutamyl-tRNA(Gln) amidotransferase subunit F, mitochondrial of Komagataella phaffii (strain GS115 / ATCC 20864) (Yeast).